Here is a 181-residue protein sequence, read N- to C-terminus: Adenine phosphoribosyltransferase 1 (181 aa).

Belongs to the purine/pyrimidine phosphoribosyltransferase family. In terms of assembly, homodimer.

It is found in the cytoplasm. It carries out the reaction AMP + diphosphate = 5-phospho-alpha-D-ribose 1-diphosphate + adenine. It functions in the pathway purine metabolism; AMP biosynthesis via salvage pathway; AMP from adenine: step 1/1. Its function is as follows. Catalyzes a salvage reaction resulting in the formation of AMP, that is energically less costly than de novo synthesis. In Triticum aestivum (Wheat), this protein is Adenine phosphoribosyltransferase 1 (APT1).